A 478-amino-acid chain; its full sequence is H(+)/Cl(-) exchange transporter ClcA (478 aa).

Topologically, residues 1 to 32 (MTHSTQQLSPEGVAEGKRGRLIRELVNRDKTP) are cytoplasmic. The chain crosses the membrane as a helical span at residues 33-69 (LIILIMAAVVGVVTGLLGVAFDRGVDWVQQQRLLALA). Residues 70–76 (NVADYAL) lie on the Periplasmic side of the membrane. Residues 77 to 100 (LVWPLAFIMSALLAMMGYFLVSRF) form a helical membrane-spanning segment. A Selectivity filter part_1 motif is present at residues 106 to 110 (GSGIP). Serine 107 contacts chloride. The segment at residues 109-116 (IPEIEGAM) is an intramembrane region (helical). At 117–123 (EEMRPVR) the chain is on the cytoplasmic side. Helical transmembrane passes span 124–141 (WWRV…TLGA) and 148–166 (EGPM…VDIF). The short motif at 146 to 150 (GREGP) is the Selectivity filter part_2 element. Residues 167 to 176 (RLRSPEARHS) lie on the Cytoplasmic side of the membrane. 2 consecutive intramembrane regions (helical) follow at residues 177–189 (LLAT…LSAA) and 193–201 (PLAGILFVI). Residues 202–214 (EEMRSQFRYSLVS) are Cytoplasmic-facing. A helical membrane pass occupies residues 215–232 (IKAVFIGVITSTIVYRYF). Over 233-252 (NGERAIIEVGKLSDAPLNTL) the chain is Periplasmic. Residues 253 to 281 (WLYLLLGIIFGAVGVIFNALIFRTQDMFV) traverse the membrane as a helical segment. The Cytoplasmic segment spans residues 282-287 (RFHGGD). The chain crosses the membrane as a helical span at residues 288–309 (WRKLVLIGGLLGGMCGLLALLH). The Periplasmic segment spans residues 310–329 (GNAVGGGFALIPIAAAGNFS). A run of 2 helical transmembrane segments spans residues 330 to 349 (IGML…LCFG) and 355 to 376 (GIFA…LSCA). The Selectivity filter part_3 motif lies at 355–359 (GIFAP). 2 residues coordinate chloride: isoleucine 356 and phenylalanine 357. The Periplasmic portion of the chain corresponds to 377–386 (HFFPQYGIEA). An intramembrane region (helical) is located at residues 387–401 (GTFAIAGMGALFAAS). Positions 402-404 (VRA) form an intramembrane region, note=Loop between two helices. Positions 405-416 (PLTGIVLVLEMT) form an intramembrane region, helical. The segment at residues 417-421 (DNYQL) is an intramembrane region (note=Loop between two helices). A helical transmembrane segment spans residues 422–438 (ILPMIVTCLGATLIAQF). The Cytoplasmic portion of the chain corresponds to 439-478 (MGGKPLYSAILARTLAKQEQARATVIAQEPAVENTPQIGK). Tyrosine 445 is a chloride binding site.

Belongs to the chloride channel (TC 2.A.49) family. ClcA subfamily. As to quaternary structure, homodimer.

It is found in the cell inner membrane. The enzyme catalyses 2 chloride(in) + H(+)(out) = 2 chloride(out) + H(+)(in). In terms of biological role, proton-coupled chloride transporter. Functions as antiport system and exchanges two chloride ions for 1 proton. Probably acts as an electrical shunt for an outwardly-directed proton pump that is linked to amino acid decarboxylation, as part of the extreme acid resistance (XAR) response. In Yersinia pestis bv. Antiqua (strain Antiqua), this protein is H(+)/Cl(-) exchange transporter ClcA.